The sequence spans 134 residues: Large ribosomal subunit protein uL14 (134 aa).

This sequence belongs to the universal ribosomal protein uL14 family. Part of the 50S ribosomal subunit. Forms a cluster with proteins L3 and L19. In the 70S ribosome, L14 and L19 interact and together make contacts with the 16S rRNA in bridges B5 and B8.

Binds to 23S rRNA. Forms part of two intersubunit bridges in the 70S ribosome. The polypeptide is Large ribosomal subunit protein uL14 (Deinococcus deserti (strain DSM 17065 / CIP 109153 / LMG 22923 / VCD115)).